We begin with the raw amino-acid sequence, 110 residues long: U1-lycotoxin-Ls1kk (110 aa).

Positions 1–20 (MKFVLLFGVLLVTLFSYSSA) are cleaved as a signal peptide. The propeptide occupies 21–44 (EMFDDFDQADEDELLSLIEKEEAR). 4 disulfide bridges follow: Cys47-Cys62, Cys54-Cys71, Cys61-Cys89, and Cys73-Cys87.

The protein belongs to the neurotoxin 19 (CSTX) family. 03 subfamily. As to expression, expressed by the venom gland.

The protein resides in the secreted. The polypeptide is U1-lycotoxin-Ls1kk (Lycosa singoriensis (Wolf spider)).